The sequence spans 24 residues: Erythromycin resistance leader peptide (24 aa).

Low complexity predominate over residues 1-14 (MSMGIAARPPRAAL). Positions 1–24 (MSMGIAARPPRAALLPPPSVPRSR) are disordered. The span at 15–24 (LPPPSVPRSR) shows a compositional bias: pro residues.

Functionally, this peptide is involved in the control mechanism of the synthesis of the macrolide-lincosamide-streptogramin B resistance protein. This is Erythromycin resistance leader peptide from Streptomyces fradiae (Streptomyces roseoflavus).